The chain runs to 202 residues: Ion-translocating oxidoreductase complex subunit G (202 aa).

Residues 11-31 (AILLALIALICTALSTGIYLL) traverse the membrane as a helical segment. Position 177 is an FMN phosphoryl threonine (T177).

It belongs to the RnfG family. The complex is composed of six subunits: RnfA, RnfB, RnfC, RnfD, RnfE and RnfG. The cofactor is FMN.

The protein localises to the cell inner membrane. Part of a membrane-bound complex that couples electron transfer with translocation of ions across the membrane. This chain is Ion-translocating oxidoreductase complex subunit G, found in Pasteurella multocida (strain Pm70).